The primary structure comprises 200 residues: TATA-box-binding protein (200 aa).

Repeat copies occupy residues 25–101 (LQNI…ARII) and 115–192 (IQNI…YPVL).

It belongs to the TBP family. In terms of assembly, belongs to the TFIID complex together with the TBP-associated factors (TAFs). Binds DNA as monomer.

Its subcellular location is the nucleus. Functionally, general transcription factor that functions at the core of the DNA-binding multiprotein factor TFIID. Binding of TFIID to the TATA box is the initial transcriptional step of the pre-initiation complex (PIC), playing a role in the activation of eukaryotic genes transcribed by RNA polymerase II. This chain is TATA-box-binding protein, found in Mesembryanthemum crystallinum (Common ice plant).